The primary structure comprises 588 residues: Adenine deaminase (588 aa).

Belongs to the metallo-dependent hydrolases superfamily. Adenine deaminase family. Homodimer. Requires Mn(2+) as cofactor.

It carries out the reaction adenine + H2O + H(+) = hypoxanthine + NH4(+). This is Adenine deaminase from Escherichia coli O139:H28 (strain E24377A / ETEC).